The sequence spans 95 residues: NELL2-interacting cell ontogeny regulator 1 (95 aa).

Residues 1-34 form the signal peptide; that stretch reads MAPPPACRSPMSPPPPPLLLLLLSLALLGARARA.

Belongs to the NICOL family. As to quaternary structure, interacts with NELL2; triggers epididymal differentiation. Interacts with cell surface receptor TFRC; the interaction mediates uptake of NICOL1 into fibroblasts. In terms of tissue distribution, detected in the brain (at protein level). Also expressed at low levels in the kidney, primarily in tubular epithelial cells.

It localises to the secreted. Its subcellular location is the cytoplasm. It is found in the perinuclear region. Functionally, mRNA-binding protein which interacts with a range of target mRNAs including SERPINE1, ACTA2, CCN2 and COL4A1 and may promote extracellular matrix production. Binds to the 3'-UTR of SERPINE1 mRNA and stabilizes the mRNA, possibly by competing for binding with SERBP1 and preventing SERBP1-mediated mRNA degradation. Also binds to the 3'-UTR of ACTA2. Testis-derived lumicrine factor that triggers epididymal differentiation and sperm maturation. The chain is NELL2-interacting cell ontogeny regulator 1 from Homo sapiens (Human).